Consider the following 314-residue polypeptide: Tetraacyldisaccharide 4'-kinase (314 aa).

54–61 serves as a coordination point for ATP; it reads YIGGTGKT.

This sequence belongs to the LpxK family.

The catalysed reaction is a lipid A disaccharide + ATP = a lipid IVA + ADP + H(+). Its pathway is glycolipid biosynthesis; lipid IV(A) biosynthesis; lipid IV(A) from (3R)-3-hydroxytetradecanoyl-[acyl-carrier-protein] and UDP-N-acetyl-alpha-D-glucosamine: step 6/6. In terms of biological role, transfers the gamma-phosphate of ATP to the 4'-position of a tetraacyldisaccharide 1-phosphate intermediate (termed DS-1-P) to form tetraacyldisaccharide 1,4'-bis-phosphate (lipid IVA). The polypeptide is Tetraacyldisaccharide 4'-kinase (Pelagibacter ubique (strain HTCC1062)).